A 1091-amino-acid polypeptide reads, in one-letter code: Ubiquitin carboxyl-terminal hydrolase 36 (1091 aa).

The disordered stretch occupies residues 115–152; the sequence is ANGHDNNGRKLSDHPNQNHNHANPNGHHANPNELPKPK. Residues 128–146 show a composition bias toward low complexity; the sequence is HPNQNHNHANPNGHHANPN. Residues 176 to 484 enclose the USP domain; sequence SGMINAGNTC…NAYIMFYELD (309 aa). The Nucleophile role is filled by Cys-185. His-443 (proton acceptor) is an active-site residue. Residues Ser-518 and Ser-522 each carry the phosphoserine modification. Disordered regions lie at residues 523 to 572, 594 to 892, 972 to 1007, and 1068 to 1091; these read PAKF…KSPL, PTAN…ELLK, QRDL…GYNP, and LAAG…QQQS. Residues 547–572 are compositionally biased toward polar residues; it reads TTIQFKPQHQPSHQQNGVQQSAKSPL. Residues 594–612 show a composition bias toward low complexity; that stretch reads PTANGNKSSSNHSNHKSVN. Positions 643–652 are enriched in basic and acidic residues; that stretch reads KMDDCMDSGK. A compositionally biased stretch (low complexity) spans 653-667; the sequence is PKSPVKTPVKTPLKS. Thr-659 and Thr-663 each carry phosphothreonine. Residues Ser-673 and Ser-675 each carry the phosphoserine modification. Positions 691-702 are enriched in basic and acidic residues; it reads RSSDSSDSEHEP. The span at 703–727 shows a compositional bias: polar residues; it reads TTSSVQLNGHSKTNGSLSNGSSKST. Ser-749 is modified (phosphoserine). Positions 749-759 are enriched in acidic residues; it reads SEDDDDDEDEP. The span at 769–780 shows a compositional bias: low complexity; the sequence is PQKQSQSQSRSG. Positions 781–790 are enriched in pro residues; that stretch reads PPSPKTPPSP. Residue Ser-783 is modified to Phosphoserine. Phosphothreonine is present on Thr-786. Ser-789 carries the phosphoserine modification. A compositionally biased stretch (acidic residues) spans 806 to 821; the sequence is DGDDDEDDDDDDDEVV. Thr-829 is subject to Phosphothreonine. Composition is skewed to polar residues over residues 838-850 and 863-886; these read FASS…SPTT and AIKT…NGGT. Ser-847 is modified (phosphoserine). Thr-850 carries the post-translational modification Phosphothreonine.

It belongs to the peptidase C19 family. In terms of assembly, interacts with atms/PAF1, but not with CycT.

Its subcellular location is the nucleus. It localises to the nucleolus. It carries out the reaction Thiol-dependent hydrolysis of ester, thioester, amide, peptide and isopeptide bonds formed by the C-terminal Gly of ubiquitin (a 76-residue protein attached to proteins as an intracellular targeting signal).. Its function is as follows. Required for maintaining multiple types of adult stem cells, including male and female germline, epithelial follicle cell and intestinal stem cells. May function as a transcriptional repressor by continually deubiquiting histone H2B at the promoters of genes critical for cellular differentiation, thereby preventing histone H3 'Lys-4' trimethylation (H3K4). Controls selective autophagy activation by ubiquitinated proteins. This chain is Ubiquitin carboxyl-terminal hydrolase 36 (Usp36), found in Drosophila ananassae (Fruit fly).